The chain runs to 77 residues: Acyl carrier protein (77 aa).

One can recognise a Carrier domain in the interval 2–77 (SDIAARVKKI…DATKFISEAQ (76 aa)). S37 is subject to O-(pantetheine 4'-phosphoryl)serine.

The protein belongs to the acyl carrier protein (ACP) family. 4'-phosphopantetheine is transferred from CoA to a specific serine of apo-ACP by AcpS. This modification is essential for activity because fatty acids are bound in thioester linkage to the sulfhydryl of the prosthetic group.

The protein localises to the cytoplasm. It functions in the pathway lipid metabolism; fatty acid biosynthesis. Functionally, carrier of the growing fatty acid chain in fatty acid biosynthesis. The sequence is that of Acyl carrier protein from Jannaschia sp. (strain CCS1).